The primary structure comprises 405 residues: Tryptophan synthase beta chain (405 aa).

An N6-(pyridoxal phosphate)lysine modification is found at Lys95.

The protein belongs to the TrpB family. In terms of assembly, tetramer of two alpha and two beta chains. Requires pyridoxal 5'-phosphate as cofactor.

It catalyses the reaction (1S,2R)-1-C-(indol-3-yl)glycerol 3-phosphate + L-serine = D-glyceraldehyde 3-phosphate + L-tryptophan + H2O. It participates in amino-acid biosynthesis; L-tryptophan biosynthesis; L-tryptophan from chorismate: step 5/5. The beta subunit is responsible for the synthesis of L-tryptophan from indole and L-serine. This is Tryptophan synthase beta chain from Pseudomonas putida (strain W619).